We begin with the raw amino-acid sequence, 374 residues long: 2,7-anhydro-N-acetylneuraminate hydratase (374 aa).

NAD(+)-binding residues include Y13, F14, D35, N38, T70, N72, H75, E92, K93, W162, and K163.

It belongs to the Gfo/Idh/MocA family. Homodimer. The cofactor is NAD(+).

It carries out the reaction N-acetyl-2,7-anhydro-alpha-neuraminate + H2O = N-acetyl-alpha-neuraminate. Neu5Ac is produced in the presence of NAD(+) or NADH, but not in the presence of FAD. Functionally, hydratase involved in the degradation of sialic acids, which are present in the host mucus layer and represent a much-coveted source of nutrients for R.gnavus, a prevalent member of the normal gut microbiota. Catalyzes the reversible conversion of the dehydrated form of N-acetylneuraminate (Neu5Ac), 2,7-anhydro-N-acetylneuraminate (2,7-AN), to Neu5Ac, allowing growth on 2,7-AN produced by the IT-sialidase NanH. Acts through a multistep mechanism involving a keto intermediate and cycling of NADH/NAD(+). The sequence is that of 2,7-anhydro-N-acetylneuraminate hydratase from Mediterraneibacter gnavus (strain ATCC 29149 / DSM 114966 / JCM 6515 / VPI C7-9) (Ruminococcus gnavus).